The primary structure comprises 522 residues: Thiamine biosynthetic bifunctional enzyme TH1, chloroplastic (522 aa).

The N-terminal 36 residues, 1–36, are a transit peptide targeting the chloroplast; it reads MNSLGGIRSWPANWRSTTASMTTTESVRKVPQVLTV. 4-amino-2-methyl-5-(diphosphooxymethyl)pyrimidine contacts are provided by residues 345–349 and Asn-377; that span reads QLREK. Residues Asp-378 and Asp-397 each coordinate Mg(2+). Ser-416 contacts 4-amino-2-methyl-5-(diphosphooxymethyl)pyrimidine. 442–444 contributes to the 2-[(2R,5Z)-2-carboxy-4-methylthiazol-5(2H)-ylidene]ethyl phosphate binding site; it reads TNT. Lys-445 serves as a coordination point for 4-amino-2-methyl-5-(diphosphooxymethyl)pyrimidine. 2-[(2R,5Z)-2-carboxy-4-methylthiazol-5(2H)-ylidene]ethyl phosphate-binding positions include Gly-472 and 495-496; that span reads VS.

This sequence belongs to the thiamine-phosphate synthase family. Requires Mg(2+) as cofactor.

The protein resides in the plastid. The protein localises to the chloroplast. It carries out the reaction 2-[(2R,5Z)-2-carboxy-4-methylthiazol-5(2H)-ylidene]ethyl phosphate + 4-amino-2-methyl-5-(diphosphooxymethyl)pyrimidine + 2 H(+) = thiamine phosphate + CO2 + diphosphate. The enzyme catalyses 2-(2-carboxy-4-methylthiazol-5-yl)ethyl phosphate + 4-amino-2-methyl-5-(diphosphooxymethyl)pyrimidine + 2 H(+) = thiamine phosphate + CO2 + diphosphate. The catalysed reaction is 4-methyl-5-(2-phosphooxyethyl)-thiazole + 4-amino-2-methyl-5-(diphosphooxymethyl)pyrimidine + H(+) = thiamine phosphate + diphosphate. It catalyses the reaction 4-amino-5-hydroxymethyl-2-methylpyrimidine + ATP = 4-amino-2-methyl-5-(phosphooxymethyl)pyrimidine + ADP + H(+). It participates in cofactor biosynthesis; thiamine diphosphate biosynthesis; thiamine phosphate from 4-amino-2-methyl-5-diphosphomethylpyrimidine and 4-methyl-5-(2-phosphoethyl)-thiazole: step 1/1. The protein operates within cofactor biosynthesis; thiamine diphosphate biosynthesis; 4-amino-2-methyl-5-diphosphomethylpyrimidine from 5-amino-1-(5-phospho-D-ribosyl)imidazole: step 2/3. Functionally, essential for thiamine biosynthesis. Bifunctional enzyme that catalyzes the phosphorylation of hydroxymethylpyrimidine phosphate (HMP-P) to HMP-PP and condenses 4-methyl-5-(beta-hydroxyethyl)thiazole monophosphate (THZ-P) and 2-methyl-4-amino-5-hydroxymethyl pyrimidine pyrophosphate (HMP-PP) to form thiamine monophosphate (TMP). This Arabidopsis thaliana (Mouse-ear cress) protein is Thiamine biosynthetic bifunctional enzyme TH1, chloroplastic (TH1).